Consider the following 497-residue polypeptide: ATP synthase subunit alpha 2 (497 aa).

Residue 167 to 174 (GERATGKT) participates in ATP binding.

This sequence belongs to the ATPase alpha/beta chains family. F-type ATPases have 2 components, CF(1) - the catalytic core - and CF(0) - the membrane proton channel. CF(1) has five subunits: alpha(3), beta(3), gamma(1), delta(1), epsilon(1). CF(0) has four main subunits: a(1), b(1), b'(1) and c(9-12).

It localises to the cell inner membrane. The enzyme catalyses ATP + H2O + 4 H(+)(in) = ADP + phosphate + 5 H(+)(out). In terms of biological role, produces ATP from ADP in the presence of a proton gradient across the membrane. The alpha chain is a regulatory subunit. The polypeptide is ATP synthase subunit alpha 2 (Cereibacter sphaeroides (strain ATCC 17023 / DSM 158 / JCM 6121 / CCUG 31486 / LMG 2827 / NBRC 12203 / NCIMB 8253 / ATH 2.4.1.) (Rhodobacter sphaeroides)).